A 302-amino-acid polypeptide reads, in one-letter code: Probable 2-(5''-triphosphoribosyl)-3'-dephosphocoenzyme-A synthase (302 aa).

Belongs to the CitG/MdcB family.

The catalysed reaction is 3'-dephospho-CoA + ATP = 2'-(5''-triphospho-alpha-D-ribosyl)-3'-dephospho-CoA + adenine. This chain is Probable 2-(5''-triphosphoribosyl)-3'-dephosphocoenzyme-A synthase, found in Salmonella gallinarum (strain 287/91 / NCTC 13346).